A 1272-amino-acid polypeptide reads, in one-letter code: Myosin-binding protein C, cardiac-type (1272 aa).

The disordered stretch occupies residues 95–147 (KEPEKSEPVAPAEASPAPAASELPAPPVESNQNPEVPPAETQPEEPVDPIGLF). Over residues 102 to 117 (PVAPAEASPAPAASEL) the composition is skewed to low complexity. The Ig-like C2-type 1 domain maps to 137–252 (PEEPVDPIGL…NLIVNEAPVS (116 aa)). Residue S265 is modified to Phosphoserine; by PKA and PKC. A Phosphothreonine; by PKA and PKC modification is found at T274. S300 carries the phosphoserine; by PKA modification. 4 Ig-like C2-type domains span residues 359–451 (KKST…VKEP), 452–542 (PILI…VQEK), 543–640 (KLEV…FVPR), and 644–763 (PKIH…ADIT). Fibronectin type-III domains are found at residues 772 to 868 (PPEA…IAPP) and 870 to 965 (EPTH…VQEI). In terms of domain architecture, Ig-like C2-type 6 spans 969–1057 (PKICVPRHLR…ENMTDTVAIT (89 aa)). A Fibronectin type-III 3 domain is found at 1066 to 1161 (PPQNIKLADV…TKNPAYIQKT (96 aa)). S1169 is subject to Phosphoserine; by PKC. One can recognise an Ig-like C2-type 7 domain in the interval 1179 to 1263 (PKFTHPLVNR…VNERGEAEIE (85 aa)).

The protein belongs to the immunoglobulin superfamily. MyBP family. In terms of processing, substrate for phosphorylation by PKA and PKC. Reversible phosphorylation appears to modulate contraction. In terms of tissue distribution, expressed specifically in cardiac muscle among adult tissues, but is also expressed transiently in the skeletal muscle at early developmental stages. Isoform Type I is found in embryonic skeletal muscle and isoform Type II is found in both embryonic skeletal and cardiac muscle.

Its function is as follows. Thick filament-associated protein located in the crossbridge region of vertebrate striated muscle A bands. In vitro it binds MHC, F-actin and native thin filaments, and modifies the activity of actin-activated myosin ATPase. It may modulate muscle contraction or may play a more structural role. May be involved in the early phase of myofibrillogenesis. In Gallus gallus (Chicken), this protein is Myosin-binding protein C, cardiac-type (MYBPC3).